The sequence spans 544 residues: Flagellar hook-associated protein 1 (544 aa).

It belongs to the flagella basal body rod proteins family.

The protein resides in the secreted. The protein localises to the bacterial flagellum. In Buchnera aphidicola subsp. Schizaphis graminum (strain Sg), this protein is Flagellar hook-associated protein 1 (flgK).